The primary structure comprises 395 residues: Protein PIN-LIKES 7 (395 aa).

Residues 1 to 8 (MGFLELLE) are Lumenal-facing. The chain crosses the membrane as a helical span at residues 9 to 29 (VASMPIVQVLLISVLGAFLAT). Over 30 to 45 (DYCSLLSADTRRSVNK) the chain is Cytoplasmic. The chain crosses the membrane as a helical span at residues 46–66 (LVFVVFTPCIMFANLAETVTL). At 67 to 73 (QDIISWW) the chain is on the lumenal side. The chain crosses the membrane as a helical span at residues 74–94 (FMPINVGITFLVGGILGWLVV). The Cytoplasmic segment spans residues 95-106 (KLLNPKPQLHGL). Residues 107 to 127 (IIATCASGNMGNLMLILVPAI) form a helical membrane-spanning segment. The Lumenal portion of the chain corresponds to 128–142 (CDEEGSPFGNRSVCR). Residues 143–163 (SIGLSYASFSMALGGFYIWTY) traverse the membrane as a helical segment. The Cytoplasmic portion of the chain corresponds to 164–232 (SYQLVRSSAT…KDLLHQILEE (69 aa)). A helical membrane pass occupies residues 233-253 (LFAPPTIGAILGFVFGATNWL). Topologically, residues 254 to 272 (RNLIIGENAPLRVIQDSVK) are lumenal. Residues 273 to 293 (LLGEGTIPCITLILGGNLIQG) form a helical membrane-spanning segment. The Cytoplasmic portion of the chain corresponds to 294 to 302 (LRSSAVKKS). The helical transmembrane segment at 303–323 (VIVGVIIVRYILLPVVGVGVV) threads the bilayer. At 324 to 340 (QLAGNLGYLPPDPLFRY) the chain is on the lumenal side. A helical transmembrane segment spans residues 341-361 (VLMLQFALPPAMNISTMAQLF). The Cytoplasmic portion of the chain corresponds to 362 to 369 (DVAQDECS). Residues 370-390 (VIFLWTYLVASLALTVWSTIF) traverse the membrane as a helical segment. Residues 391–395 (LSILS) are Lumenal-facing.

This sequence belongs to the auxin efflux carrier (TC 2.A.69.2) family. In terms of tissue distribution, expressed in seedlings, rosette and cauline leaves, stems and flowers.

It is found in the endoplasmic reticulum membrane. Functionally, involved in cellular auxin homeostasis by regulating auxin metabolism. Regulates intracellular auxin accumulation at the endoplasmic reticulum and thus auxin availability for nuclear auxin signaling. The chain is Protein PIN-LIKES 7 from Arabidopsis thaliana (Mouse-ear cress).